The chain runs to 673 residues: UvrABC system protein B (673 aa).

The Helicase ATP-binding domain occupies 24–182 (EGVERNDPAQ…YSFVEILYNR (159 aa)). 37–44 (GVTGSGKT) lines the ATP pocket. The Beta-hairpin motif lies at 90-113 (YYDYYQPEAFMPTSGLYIEKDLAI). The region spanning 429–591 (QIDDLLDEIQ…ITPITVNKSK (163 aa)) is the Helicase C-terminal domain. The UVR domain occupies 634–669 (TKMIDRAKKDMDKAAKDLDFVEAARYRDEMFALQKI).

The protein belongs to the UvrB family. As to quaternary structure, forms a heterotetramer with UvrA during the search for lesions. Interacts with UvrC in an incision complex.

It is found in the cytoplasm. Functionally, the UvrABC repair system catalyzes the recognition and processing of DNA lesions. A damage recognition complex composed of 2 UvrA and 2 UvrB subunits scans DNA for abnormalities. Upon binding of the UvrA(2)B(2) complex to a putative damaged site, the DNA wraps around one UvrB monomer. DNA wrap is dependent on ATP binding by UvrB and probably causes local melting of the DNA helix, facilitating insertion of UvrB beta-hairpin between the DNA strands. Then UvrB probes one DNA strand for the presence of a lesion. If a lesion is found the UvrA subunits dissociate and the UvrB-DNA preincision complex is formed. This complex is subsequently bound by UvrC and the second UvrB is released. If no lesion is found, the DNA wraps around the other UvrB subunit that will check the other stand for damage. The protein is UvrABC system protein B of Cytophaga hutchinsonii (strain ATCC 33406 / DSM 1761 / CIP 103989 / NBRC 15051 / NCIMB 9469 / D465).